Consider the following 523-residue polypeptide: Synaptotagmin-10 (523 aa).

The Vesicular portion of the chain corresponds to 1-55; the sequence is MSFRKEDGVSSLCQKALHIITELCFAGQVEWDKCSGIFPADRSGQGGGGTDISVS. Residues 13–35 are cysteine motif; it reads CQKALHIITELCFAGQVEWDKCS. The helical transmembrane segment at 56–76 threads the bilayer; sequence LLAVVVSFCGLALLVVSLFVF. The Cytoplasmic segment spans residues 77–523; that stretch reads WKLCWPCWKS…CSSPRPPSTP (447 aa). Residue Thr-136 is modified to Phosphothreonine. C2 domains are found at residues 231-352 and 363-496; these read TCGK…TVWK and DLGE…THWH. Residues Asp-262, Asp-268, Asp-320, Phe-321, Asp-322, Ser-325, Asp-328, Asp-394, Asp-400, Asp-454, and Asp-456 each contribute to the Ca(2+) site.

This sequence belongs to the synaptotagmin family. Homodimer; disulfide-linked via the cysteine motif. Can also form heterodimers with SYT3, SYT6, SYT7 and SYT9. It depends on Ca(2+) as a cofactor. In terms of tissue distribution, highly expressed in the olfactory bulb.

Its subcellular location is the cytoplasmic vesicle. It is found in the secretory vesicle membrane. Its function is as follows. Ca(2+) sensor specifically required for the Ca(2+)-dependent exocytosis of secretory vesicles containing IGF1 in neurons of the olfactory bulb. Exocytosis of IGF1 is required for sensory perception of smell. Not involved in Ca(2+)-dependent synaptic vesicle exocytosis. Acts through Ca(2+) and phospholipid binding to the C2 domain: Ca(2+) induces binding of the C2-domains to phospholipid membranes and to assembled SNARE-complexes; both actions contribute to triggering exocytosis. In Mus musculus (Mouse), this protein is Synaptotagmin-10.